The sequence spans 241 residues: Demethylmenaquinone methyltransferase (241 aa).

Residues Thr60, Asp81, and 106–107 contribute to the S-adenosyl-L-methionine site; that span reads DA.

This sequence belongs to the class I-like SAM-binding methyltransferase superfamily. MenG/UbiE family.

It catalyses the reaction a 2-demethylmenaquinol + S-adenosyl-L-methionine = a menaquinol + S-adenosyl-L-homocysteine + H(+). The protein operates within quinol/quinone metabolism; menaquinone biosynthesis; menaquinol from 1,4-dihydroxy-2-naphthoate: step 2/2. Its function is as follows. Methyltransferase required for the conversion of demethylmenaquinol (DMKH2) to menaquinol (MKH2). The chain is Demethylmenaquinone methyltransferase from Staphylococcus aureus (strain MRSA252).